Consider the following 166-residue polypeptide: Cytochrome c-type biogenesis protein CcmE (166 aa).

Residues 1 to 13 (MNFLPKSRKARRR) are Cytoplasmic-facing. Residues 14-34 (LTILAVAAPVVALAVGLALWG) form a helical; Signal-anchor for type II membrane protein membrane-spanning segment. The Periplasmic segment spans residues 35-166 (MRDAISLFYT…QGYKPGKPNT (132 aa)). Positions 128 and 132 each coordinate heme. The disordered stretch occupies residues 143 to 166 (EQGEWRGDGQAPSYQGYKPGKPNT).

This sequence belongs to the CcmE/CycJ family.

Its subcellular location is the cell inner membrane. Its function is as follows. Heme chaperone required for the biogenesis of c-type cytochromes. Transiently binds heme delivered by CcmC and transfers the heme to apo-cytochromes in a process facilitated by CcmF and CcmH. The protein is Cytochrome c-type biogenesis protein CcmE of Caulobacter sp. (strain K31).